The sequence spans 570 residues: Guanine nucleotide-binding protein alpha-3 subunit (570 aa).

Residues 10–113 enclose the PH domain; sequence RETLRAYLSK…WIEAIKHAIE (104 aa). A G-alpha domain is found at 144 to 570; sequence PVLKLLLLGT…IISKTLEFYC (427 aa). The interval 147 to 160 is G1 motif; the sequence is KLLLLGTGESGKST. 152–159 is a binding site for GTP; that stretch reads GTGESGKS. Ser159 provides a ligand contact to Mg(2+). Low complexity-rich tracts occupy residues 254–272 and 290–316; these read NNNSNSSSLKNNSGGSSSS and NSNSASPNGPSSSTTTSTINTHNRSNS. The interval 254–321 is disordered; that stretch reads NNNSNSSSLK…NRSNSDGSSN (68 aa). The segment at 386–394 is G2 motif; sequence DILKSRATT. Residues 388-394, 414-418, 483-486, and Ala544 contribute to the GTP site; these read LKSRATT, DVAGQ, and NKID. Thr394 provides a ligand contact to Mg(2+). The segment at 410-419 is G3 motif; that stretch reads FRIVDVAGQR. The segment at 479 to 486 is G4 motif; that stretch reads ILFLNKID. The G5 motif stretch occupies residues 542 to 547; sequence TCATDT.

Belongs to the G-alpha family. G proteins are composed of 3 units; alpha, beta and gamma. The alpha chain contains the guanine nucleotide binding site.

Guanine nucleotide-binding proteins (G proteins) are involved as modulators or transducers in various transmembrane signaling systems. G alpha-3 plays a role in development. G alpha-3 mutants fail to aggregate. The sequence is that of Guanine nucleotide-binding protein alpha-3 subunit (gpaC) from Dictyostelium discoideum (Social amoeba).